The chain runs to 157 residues: Short-type peptidyl-prolyl cis-trans isomerase (157 aa).

The 95-residue stretch at 1–95 (MINLIKKGDY…RDERLIQEIP (95 aa)) folds into the PPIase FKBP-type domain. An IF region spans residues 86 to 137 (RDERLIQEIPKEMFADADFEPQEGMLILASGIPAKIIKVTDDTVTLDFNHEL).

The protein belongs to the FKBP-type PPIase family.

Its subcellular location is the cytoplasm. The enzyme catalyses [protein]-peptidylproline (omega=180) = [protein]-peptidylproline (omega=0). Functionally, catalyzes the cis-trans isomerization of peptidyl prolyl bonds and accelerates protein folding. Also exhibits chaperone-like activity. The protein is Short-type peptidyl-prolyl cis-trans isomerase of Methanocaldococcus jannaschii (strain ATCC 43067 / DSM 2661 / JAL-1 / JCM 10045 / NBRC 100440) (Methanococcus jannaschii).